We begin with the raw amino-acid sequence, 370 residues long: Protein rough sheath 2 (370 aa).

HTH myb-type domains lie at 1–53 (MKER…KNYL) and 54–108 (RPGI…EKQQ). 2 DNA-binding regions (H-T-H motif) span residues 27 to 53 (WHLVSQRMNVALDRDAKSCLERWKNYL) and 81 to 104 (WKKIAAEVPGRTAKRLGKWWEVFK). Positions 107-129 (QQRELRDSRRPPPEPSPDERGRY) are disordered. A coiled-coil region spans residues 276–340 (KRVEQQLEME…QVKEEKMAEQ (65 aa)).

Homodimer. Interacts with AS2, WRKY1, HIRA, a probable histone chaperone, and RIK, a predicted RNA binding protein. In terms of tissue distribution, expressed in lateral organ promordia.

Its subcellular location is the nucleus. Transcription factor required for normal cell differentiation. Interacts directly with asymmetric leaves 2 (AS2) to repress the knox homeobox genes. The sequence is that of Protein rough sheath 2 (RS2) from Zea mays (Maize).